A 458-amino-acid polypeptide reads, in one-letter code: Serine--tRNA ligase (458 aa).

Residue 252 to 254 coordinates L-serine; the sequence is TAE. ATP contacts are provided by residues 283–285 and valine 299; that span reads RKE. Glutamate 306 provides a ligand contact to L-serine. ATP is bound at residue 370-373; the sequence is EMVS. Threonine 405 contributes to the L-serine binding site.

It belongs to the class-II aminoacyl-tRNA synthetase family. Type-1 seryl-tRNA synthetase subfamily. In terms of assembly, homodimer. The tRNA molecule binds across the dimer.

It is found in the cytoplasm. It carries out the reaction tRNA(Ser) + L-serine + ATP = L-seryl-tRNA(Ser) + AMP + diphosphate + H(+). The enzyme catalyses tRNA(Sec) + L-serine + ATP = L-seryl-tRNA(Sec) + AMP + diphosphate + H(+). It functions in the pathway aminoacyl-tRNA biosynthesis; selenocysteinyl-tRNA(Sec) biosynthesis; L-seryl-tRNA(Sec) from L-serine and tRNA(Sec): step 1/1. Catalyzes the attachment of serine to tRNA(Ser). Is also able to aminoacylate tRNA(Sec) with serine, to form the misacylated tRNA L-seryl-tRNA(Sec), which will be further converted into selenocysteinyl-tRNA(Sec). This Sulfolobus acidocaldarius (strain ATCC 33909 / DSM 639 / JCM 8929 / NBRC 15157 / NCIMB 11770) protein is Serine--tRNA ligase.